The chain runs to 237 residues: V-type proton ATPase subunit E (237 aa).

This sequence belongs to the V-ATPase E subunit family. V-ATPase is a heteromultimeric enzyme composed of a peripheral catalytic V1 complex (components A to H) attached to an integral membrane V0 proton pore complex (components: a, c, c', c'' and d).

Subunit of the peripheral V1 complex of vacuolar ATPase essential for assembly or catalytic function. V-ATPase is responsible for acidifying a variety of intracellular compartments in eukaryotic cells. In Gossypium hirsutum (Upland cotton), this protein is V-type proton ATPase subunit E (VATE).